The following is a 681-amino-acid chain: Type VI secretion system spike protein VgrG1 (681 aa).

The segment at 621 to 640 is disordered; that stretch reads NSGGSPSSGSGWGGKSPVDP.

The protein belongs to the VgrG protein family.

It localises to the secreted. The catalysed reaction is L-arginyl-[protein] + NAD(+) = N(omega)-(ADP-D-ribosyl)-L-arginyl-[protein] + nicotinamide + H(+). Part of the type VI secretion system specialized secretion system, which delivers several virulence factors in both prokaryotic and eukaryotic cells during infection. Acts directly as an secreted effector with an actin ADP-ribosyltransferase activity that disrupts the host actin cytoskeleton, leading to a decrease in host cell viability and an increase in apoptosis. This chain is Type VI secretion system spike protein VgrG1 (vgrG1), found in Aeromonas hydrophila.